Reading from the N-terminus, the 372-residue chain is DNA-directed RNA polymerase subunit alpha (372 aa).

The interval 1-268 (MIFDEDSNSI…DQFQPFINFD (268 aa)) is alpha N-terminal domain (alpha-NTD). The interval 280 to 372 (KDTLPYDSNL…ESLSKQYSEE (93 aa)) is alpha C-terminal domain (alpha-CTD).

This sequence belongs to the RNA polymerase alpha chain family. As to quaternary structure, homodimer. The RNAP catalytic core consists of 2 alpha, 1 beta, 1 beta' and 1 omega subunit. When a sigma factor is associated with the core the holoenzyme is formed, which can initiate transcription.

The catalysed reaction is RNA(n) + a ribonucleoside 5'-triphosphate = RNA(n+1) + diphosphate. DNA-dependent RNA polymerase catalyzes the transcription of DNA into RNA using the four ribonucleoside triphosphates as substrates. The protein is DNA-directed RNA polymerase subunit alpha of Ehrlichia chaffeensis (strain ATCC CRL-10679 / Arkansas).